The chain runs to 257 residues: Snake venom serine protease KN3 (257 aa).

The N-terminal stretch at 1 to 18 is a signal peptide; it reads MVLIRVLANLLILQLSYA. Residues 19 to 24 constitute a propeptide that is removed on maturation; it reads QKSSKL. In terms of domain architecture, Peptidase S1 spans 25-248; the sequence is VVGGDECNIN…HLDWIKSIIA (224 aa). 6 cysteine pairs are disulfide-bonded: Cys31-Cys162, Cys49-Cys65, Cys97-Cys255, Cys141-Cys209, Cys173-Cys188, and Cys199-Cys224. Catalysis depends on charge relay system residues His64 and Asp109. N-linked (GlcNAc...) asparagine glycans are attached at residues Asn120, Asn121, and Asn164. The active-site Charge relay system is the Ser203.

Belongs to the peptidase S1 family. Snake venom subfamily. In terms of assembly, monomer. As to expression, expressed by the venom gland.

The protein resides in the secreted. In terms of biological role, snake venom serine protease that may act in the hemostasis system of the prey. This Trimeresurus stejnegeri (Chinese green tree viper) protein is Snake venom serine protease KN3.